The sequence spans 188 residues: PRA1 family protein 3 (188 aa).

M1 carries the N-acetylmethionine modification. Residues M1–R35 lie on the Cytoplasmic side of the membrane. 2 consecutive transmembrane segments (helical) span residues V36–S56 and I57–F77. The Cytoplasmic segment spans residues T78–M93. 2 consecutive transmembrane segments (helical) span residues K94–S114 and M115–I135. The tract at residues M103–G117 is required for homodimer formation and heterodimer formation with ARL6IP1. The Cytoplasmic segment spans residues H136 to E188. The tract at residues H136–E188 is targeting to endoplasmic reticulum membrane.

The protein belongs to the PRA1 family. As to quaternary structure, homodimer. Heterodimer with ARL6IP1. Forms multimers. Interacts with ARL6. Interacts with prenylated RAB1A and RAB3A. Interacts with SLC1A1/EAAC1. Interacts with RTN2 (via first transmembrane domain). Does not interact with VAMP1, VAMP2 or VAMP3.

It is found in the endoplasmic reticulum membrane. Its subcellular location is the cell membrane. The protein resides in the cytoplasm. The protein localises to the cytoskeleton. Regulates intracellular concentrations of taurine and glutamate. Negatively modulates SLC1A1/EAAC1 glutamate transport activity by decreasing its affinity for glutamate in a PKC activity-dependent manner. Plays a role in the retention of SLC1A1/EAAC1 in the endoplasmic reticulum. The sequence is that of PRA1 family protein 3 (ARL6IP5) from Homo sapiens (Human).